We begin with the raw amino-acid sequence, 387 residues long: Large ribosomal subunit protein uL3 (387 aa).

Phosphoserine is present on Ser-24. Lys-39 participates in a covalent cross-link: Glycyl lysine isopeptide (Lys-Gly) (interchain with G-Cter in ubiquitin). Position 103 is a phosphothreonine (Thr-103). Lys-136 is covalently cross-linked (Glycyl lysine isopeptide (Lys-Gly) (interchain with G-Cter in ubiquitin)). A Phosphoserine modification is found at Ser-156. His-243 is subject to Pros-methylhistidine. Position 297 is a phosphoserine (Ser-297).

It belongs to the universal ribosomal protein uL3 family. In terms of assembly, component of the large ribosomal subunit (LSU). Mature yeast ribosomes consist of a small (40S) and a large (60S) subunit. The 40S small subunit contains 1 molecule of ribosomal RNA (18S rRNA) and 33 different proteins (encoded by 57 genes). The large 60S subunit contains 3 rRNA molecules (25S, 5.8S and 5S rRNA) and 46 different proteins (encoded by 81 genes). uL3 forms together with ES39L one of the contact sites for the signal recognition particle that targets ribosomes to the endoplasmic reticulum membrane. In terms of processing, methylation at His-243 by HPM1 is required for proper 60S subunit assembly and promotes translational elongation fidelity.

The protein resides in the cytoplasm. Its function is as follows. Component of the ribosome, a large ribonucleoprotein complex responsible for the synthesis of proteins in the cell. The small ribosomal subunit (SSU) binds messenger RNAs (mRNAs) and translates the encoded message by selecting cognate aminoacyl-transfer RNA (tRNA) molecules. The large subunit (LSU) contains the ribosomal catalytic site termed the peptidyl transferase center (PTC), which catalyzes the formation of peptide bonds, thereby polymerizing the amino acids delivered by tRNAs into a polypeptide chain. The nascent polypeptides leave the ribosome through a tunnel in the LSU and interact with protein factors that function in enzymatic processing, targeting, and the membrane insertion of nascent chains at the exit of the ribosomal tunnel. uL3 plays a role in coordinating processes of accommodating the aminoacyl-tRNA in the PTC. In Saccharomyces cerevisiae (strain ATCC 204508 / S288c) (Baker's yeast), this protein is Large ribosomal subunit protein uL3.